The sequence spans 248 residues: tRNA (guanine-N(1)-)-methyltransferase (248 aa).

Residues Gly-113 and Ile-133–Leu-138 each bind S-adenosyl-L-methionine. Residues Arg-227–Gly-248 are disordered. Residues Ala-234 to Gly-248 show a composition bias toward basic and acidic residues.

This sequence belongs to the RNA methyltransferase TrmD family. As to quaternary structure, homodimer.

The protein resides in the cytoplasm. It catalyses the reaction guanosine(37) in tRNA + S-adenosyl-L-methionine = N(1)-methylguanosine(37) in tRNA + S-adenosyl-L-homocysteine + H(+). Functionally, specifically methylates guanosine-37 in various tRNAs. In Rhodopseudomonas palustris (strain TIE-1), this protein is tRNA (guanine-N(1)-)-methyltransferase.